The primary structure comprises 455 residues: F-box/FBD/LRR-repeat protein At3g51530 (455 aa).

The tract at residues 1 to 26 is disordered; the sequence is MKNSERFSAAKPLMEQGGKSSRKPGF. Positions 29–75 constitute an F-box domain; that stretch reads EDRISELPEVLLLQILSSLPTKLVISTSVLSKRWLSLWKMVQRLEFE. LRR repeat units follow at residues 80–106, 155–182, 183–208, 227–257, 277–302, and 325–351; these read IYDF…HLKV, ETLK…HLLS, VVYK…VLRR, TLLL…GIES, IRNV…SLDL, and THKV…KLID. Residues 370–417 enclose the FBD domain; that stretch reads KWNQPKYVPECLETFMWRNCNWGREEEKEVATYILRNARQLKKATFST.

The sequence is that of F-box/FBD/LRR-repeat protein At3g51530 from Arabidopsis thaliana (Mouse-ear cress).